We begin with the raw amino-acid sequence, 529 residues long: Bifunctional purine biosynthesis protein PurH (529 aa).

The MGS-like domain occupies 1 to 148 (MQQRRPIRRA…KNHKDVAIVV (148 aa)).

It belongs to the PurH family.

It carries out the reaction (6R)-10-formyltetrahydrofolate + 5-amino-1-(5-phospho-beta-D-ribosyl)imidazole-4-carboxamide = 5-formamido-1-(5-phospho-D-ribosyl)imidazole-4-carboxamide + (6S)-5,6,7,8-tetrahydrofolate. It catalyses the reaction IMP + H2O = 5-formamido-1-(5-phospho-D-ribosyl)imidazole-4-carboxamide. It participates in purine metabolism; IMP biosynthesis via de novo pathway; 5-formamido-1-(5-phospho-D-ribosyl)imidazole-4-carboxamide from 5-amino-1-(5-phospho-D-ribosyl)imidazole-4-carboxamide (10-formyl THF route): step 1/1. Its pathway is purine metabolism; IMP biosynthesis via de novo pathway; IMP from 5-formamido-1-(5-phospho-D-ribosyl)imidazole-4-carboxamide: step 1/1. The sequence is that of Bifunctional purine biosynthesis protein PurH from Yersinia pseudotuberculosis serotype O:1b (strain IP 31758).